A 153-amino-acid chain; its full sequence is Arachidonate 5-lipoxygenase-activating protein (153 aa).

Topologically, residues 1-8 are lumenal; it reads MDQETVGN. A helical membrane pass occupies residues 9–30; that stretch reads VVLLAIVTLISVVQNGFFAHKV. Residues 31–52 lie on the Cytoplasmic side of the membrane; the sequence is EHESRTQNGRSFQRTGTLAFER. The chain crosses the membrane as a helical span at residues 53–77; that stretch reads VYTANQNCVDAYPTFLAVLWSAGLL. Topologically, residues 78–80 are lumenal; that stretch reads CSQ. The chain crosses the membrane as a helical span at residues 81–102; the sequence is VPAAFAGLMYLLVRQKYFVGYL. Over 103–107 the chain is Cytoplasmic; that stretch reads GERTQ. The stretch at 108–115 is an intramembrane region; that stretch reads STPGYIFG. The chain crosses the membrane as a helical span at residues 116–128; it reads KRIILFLFLMSVA. Residues 129–153 are Lumenal-facing; it reads GIFNYYLIFFFGSDFENYIKTVTTT.

It belongs to the MAPEG family. As to quaternary structure, homotrimer. Interacts with LTC4S and ALOX5.

Its subcellular location is the nucleus membrane. It localises to the endoplasmic reticulum membrane. Its function is as follows. Required for leukotriene biosynthesis by ALOX5 (5-lipoxygenase). Anchors ALOX5 to the membrane. Binds arachidonic acid, and could play an essential role in the transfer of arachidonic acid to ALOX5. Binds to MK-886, a compound that blocks the biosynthesis of leukotrienes. In Macaca mulatta (Rhesus macaque), this protein is Arachidonate 5-lipoxygenase-activating protein (ALOX5AP).